Consider the following 185-residue polypeptide: Ribosome maturation factor RimM (185 aa).

In terms of domain architecture, PRC barrel spans 96–171; the sequence is EDEFYHSDLL…VITIDPPEDV (76 aa). The interval 165–185 is disordered; sequence IDPPEDVGSKAEEEGGGAPDD.

Belongs to the RimM family. Binds ribosomal protein uS19.

It localises to the cytoplasm. An accessory protein needed during the final step in the assembly of 30S ribosomal subunit, possibly for assembly of the head region. Essential for efficient processing of 16S rRNA. May be needed both before and after RbfA during the maturation of 16S rRNA. It has affinity for free ribosomal 30S subunits but not for 70S ribosomes. In Maricaulis maris (strain MCS10) (Caulobacter maris), this protein is Ribosome maturation factor RimM.